A 163-amino-acid polypeptide reads, in one-letter code: Centrosomal protein of 19 kDa (163 aa).

Belongs to the CEP19 family. Interacts with CEP43; this interaction is required for its localization to the mother centriole. Interacts (via residues 121-150) with RABL2B. Interacts (via C-terminus) with CEP350; this interaction is required for its localization to the mother centriole.

The protein localises to the cytoplasm. Its subcellular location is the cytoskeleton. It is found in the microtubule organizing center. It localises to the centrosome. The protein resides in the centriole. The protein localises to the spindle pole. Its subcellular location is the cilium basal body. Its function is as follows. Required for ciliation. Recruits the RABL2B GTPase to the ciliary base to initiate ciliation. After specifically capturing the activated GTP-bound RABL2B, the CEP19-RABL2B complex binds intraflagellar transport (IFT) complex B from the large pool pre-docked at the base of the cilium and thus triggers its entry into the cilia. Involved in the early steps in cilia formation by recruiting the ciliary vesicles (CVs) to the distal end of the mother centriole where they fuse to initiate cilium assembly. Involved in microtubule (MT) anchoring to the centrosomes. The chain is Centrosomal protein of 19 kDa (CEP19) from Homo sapiens (Human).